The primary structure comprises 222 residues: Octanoyltransferase (222 aa).

In terms of domain architecture, BPL/LPL catalytic spans 34 to 214; that stretch reads GEKNSTVLIL…EFSKHDEALV (181 aa). Residues 72-79, 144-146, and 157-159 each bind substrate; these read RGGKLTWH, AIG, and GVA. The active-site Acyl-thioester intermediate is C175.

It belongs to the LipB family.

Its subcellular location is the cytoplasm. The enzyme catalyses octanoyl-[ACP] + L-lysyl-[protein] = N(6)-octanoyl-L-lysyl-[protein] + holo-[ACP] + H(+). The protein operates within protein modification; protein lipoylation via endogenous pathway; protein N(6)-(lipoyl)lysine from octanoyl-[acyl-carrier-protein]: step 1/2. In terms of biological role, catalyzes the transfer of endogenously produced octanoic acid from octanoyl-acyl-carrier-protein onto the lipoyl domains of lipoate-dependent enzymes. Lipoyl-ACP can also act as a substrate although octanoyl-ACP is likely to be the physiological substrate. The chain is Octanoyltransferase from Paenarthrobacter aurescens (strain TC1).